A 491-amino-acid chain; its full sequence is Homeobox protein unplugged (491 aa).

4 disordered regions span residues 1-23, 46-69, 124-146, and 227-329; these read MERP…TKTT, SASA…QEQE, AGKE…PLPH, and FSPA…RRTA. Residues 254–264 are compositionally biased toward polar residues; it reads GDSSSDISLTL. Gly residues predominate over residues 305–316; the sequence is GLGGKDSQGNGS. Residues 323-382 constitute a DNA-binding region (homeobox); that stretch reads SRRRRTAFTSEQLLELEREFHAKKYLSLTERSQIATSLKLSEVQVKIWFQNRRAKWKRVK.

It is found in the nucleus. Functionally, plays a regulatory role in neural branching of the tracheae: segment-specific aspects of these neural branching patterns appear to be generated by homeotic regulation of expression. The polypeptide is Homeobox protein unplugged (Drosophila pseudoobscura pseudoobscura (Fruit fly)).